We begin with the raw amino-acid sequence, 529 residues long: Peptide chain release factor 3 (529 aa).

The tr-type G domain occupies 11–280 (AKRRTFAIIS…GLVEWAPAPM (270 aa)). Residues 20–27 (SHPDAGKT), 88–92 (DTPGH), and 142–145 (NKLD) contribute to the GTP site.

The protein belongs to the TRAFAC class translation factor GTPase superfamily. Classic translation factor GTPase family. PrfC subfamily.

The protein resides in the cytoplasm. Functionally, increases the formation of ribosomal termination complexes and stimulates activities of RF-1 and RF-2. It binds guanine nucleotides and has strong preference for UGA stop codons. It may interact directly with the ribosome. The stimulation of RF-1 and RF-2 is significantly reduced by GTP and GDP, but not by GMP. The sequence is that of Peptide chain release factor 3 from Shigella dysenteriae serotype 1 (strain Sd197).